A 140-amino-acid polypeptide reads, in one-letter code: MIYGIGTDIIQIARVQGVMTRTNGRFAEKVLGPDELAKYHARKARSEKRGLAFLATRFAAKEAFSKAIGLGMRWPMTWRAMELMNLPSGEPTAVCHGELAAWLAERGLVVRVSVSDEHDYAVAFAIAERSGAAVSQPTAL.

Mg(2+)-binding residues include Asp8 and Glu62.

The protein belongs to the P-Pant transferase superfamily. AcpS family. Requires Mg(2+) as cofactor.

The protein resides in the cytoplasm. The enzyme catalyses apo-[ACP] + CoA = holo-[ACP] + adenosine 3',5'-bisphosphate + H(+). In terms of biological role, transfers the 4'-phosphopantetheine moiety from coenzyme A to a Ser of acyl-carrier-protein. In Cupriavidus taiwanensis (strain DSM 17343 / BCRC 17206 / CCUG 44338 / CIP 107171 / LMG 19424 / R1) (Ralstonia taiwanensis (strain LMG 19424)), this protein is Holo-[acyl-carrier-protein] synthase.